Reading from the N-terminus, the 185-residue chain is Adenine phosphoribosyltransferase (185 aa).

This sequence belongs to the purine/pyrimidine phosphoribosyltransferase family. In terms of assembly, homodimer.

The protein localises to the cytoplasm. It catalyses the reaction AMP + diphosphate = 5-phospho-alpha-D-ribose 1-diphosphate + adenine. It functions in the pathway purine metabolism; AMP biosynthesis via salvage pathway; AMP from adenine: step 1/1. Catalyzes a salvage reaction resulting in the formation of AMP, that is energically less costly than de novo synthesis. The sequence is that of Adenine phosphoribosyltransferase from Nocardioides sp. (strain ATCC BAA-499 / JS614).